The sequence spans 120 residues: Small ribosomal subunit protein uS13 (120 aa).

Positions 96–120 (PCRGQRTRTNARTRKGPRKAIAGKK) are disordered.

Belongs to the universal ribosomal protein uS13 family. As to quaternary structure, part of the 30S ribosomal subunit. Forms a loose heterodimer with protein S19. Forms two bridges to the 50S subunit in the 70S ribosome.

Functionally, located at the top of the head of the 30S subunit, it contacts several helices of the 16S rRNA. In the 70S ribosome it contacts the 23S rRNA (bridge B1a) and protein L5 of the 50S subunit (bridge B1b), connecting the 2 subunits; these bridges are implicated in subunit movement. Contacts the tRNAs in the A and P-sites. This Chromobacterium violaceum (strain ATCC 12472 / DSM 30191 / JCM 1249 / CCUG 213 / NBRC 12614 / NCIMB 9131 / NCTC 9757 / MK) protein is Small ribosomal subunit protein uS13.